Reading from the N-terminus, the 5142-residue chain is Protein piccolo (5142 aa).

Over residues 1–21 (MGNEASLEGEGLPEGLAAAAA) the composition is skewed to low complexity. 2 disordered regions span residues 1–154 (MGNE…SMMP) and 177–583 (DLIS…PSQG). Basic and acidic residues-rich tracts occupy residues 114–125 (RTTDTFRSEQKL), 136–150 (KESK…EHKS), and 188–202 (ETTK…EQGK). A compositionally biased stretch (polar residues) spans 232 to 244 (QDGTPKSISSQQP). Composition is skewed to pro residues over residues 298–317 (LPSP…PPAQ) and 352–371 (PVQP…PAKP). The segment covering 376-385 (TGSEKPSSEQ) has biased composition (polar residues). The tract at residues 397–555 (VGKTPAQQPG…PAKPSAQQST (159 aa)) is 10 X 10 AA tandem approximate repeats of P-A-K-P-Q-P-Q-Q-P-X. Residues 467-493 (TKPPSQLPGPAKPPPQQPGPAKPPPQQ) show a composition bias toward pro residues. Low complexity predominate over residues 494–506 (PGSAKPPSQQPGS). Pro residues predominate over residues 507 to 522 (TKPPPQQPGPAKPSPQ). The span at 523-554 (QPGSTKPPSQQPGSAKPSAQQPSPAKPSAQQS) shows a compositional bias: low complexity. The C4-type zinc finger occupies 589-613 (CPLCNTTELLLHVPEKANFNTCTEC). Disordered stretches follow at residues 650-929 (LAPV…TVTG) and 945-1058 (LIST…PEST). Residues 673–683 (SKSSPQPQQTS) are compositionally biased toward low complexity. 2 stretches are compositionally biased toward basic and acidic residues: residues 684–702 (PKKD…EPKK) and 743–755 (EQDK…DKPK). Residues 765–774 (DLVSSSSATT) are compositionally biased toward polar residues. The span at 841–857 (KGQKQVDPVQKKEEPKK) shows a compositional bias: basic and acidic residues. Positions 873-882 (KGSPTPPGPR) are enriched in pro residues. Positions 889-927 (VPTPQQSPKPQEQSRRFSLNLGSITDAPKSQPTTPQETV) are enriched in polar residues. A phosphoserine mark is found at serine 906 and serine 918. A Phosphothreonine modification is found at threonine 922. Low complexity predominate over residues 949–969 (AGQPGPHSQSGPGAPMKQAPA). Composition is skewed to basic and acidic residues over residues 996-1012 (VKKE…EPKA) and 1019-1034 (KRTE…KDSK). A C4-type zinc finger spans residues 1059–1082 (CPLCKTELNIGSKDPPNFNTCTEC). 4 disordered regions span residues 1120-1163 (GDIR…QEQE), 1183-1386 (EKIP…TDEK), 1391-1410 (GLKK…SDLA), and 1423-1868 (QAST…SDPE). Residues 1126–1139 (PPAPSGPKASPMPV) show a composition bias toward pro residues. Basic and acidic residues-rich tracts occupy residues 1193 to 1265 (QKQE…HDLL), 1307 to 1318 (PKEDDKTTKTIK), and 1330 to 1347 (DQVE…DKSD). Residues 1348–1358 (TSSSQQPKSPQ) are compositionally biased toward low complexity. Residues serine 1356, serine 1366, serine 1367, serine 1396, serine 1398, serine 1401, serine 1402, and serine 1405 each carry the phosphoserine modification. The span at 1359–1374 (GLSDTGYSSDGISSSL) shows a compositional bias: polar residues. The span at 1398 to 1407 (SQESSPSSPS) shows a compositional bias: low complexity. Basic and acidic residues-rich tracts occupy residues 1428 to 1451 (ADEK…DQEK) and 1469 to 1510 (KESQ…REPY). Serine 1516, serine 1517, serine 1519, serine 1522, serine 1546, serine 1549, serine 1570, and serine 1572 each carry phosphoserine. The segment covering 1564–1576 (SADEDASGSEDDE) has biased composition (acidic residues). Residue threonine 1617 is modified to Phosphothreonine. 3 positions are modified to phosphoserine: serine 1618, serine 1628, and serine 1640. Over residues 1631 to 1640 (DEDDEAFDES) the composition is skewed to acidic residues. The segment covering 1641–1652 (PELKYRETKSQE) has biased composition (basic and acidic residues). The segment covering 1671 to 1689 (ELNSTIADKYSAESSQKKT) has biased composition (polar residues). Residues 1693–1703 (FDEEPELEMES) are compositionally biased toward acidic residues. A Phosphoserine modification is found at serine 1703. A Phosphothreonine modification is found at threonine 1705. Phosphoserine occurs at positions 1707 and 1712. Residues 1715-1732 (EGSSSLHASSFTPGTSPT) show a composition bias toward polar residues. Over residues 1772–1785 (DSSEEEELREEEEL) the composition is skewed to acidic residues. Serine 1773 and serine 1774 each carry phosphoserine. Over residues 1786 to 1799 (LKEQEKQREIEQQQ) the composition is skewed to basic and acidic residues. Threonine 1825 is modified (phosphothreonine). Residue serine 1831 is modified to Phosphoserine. Residues 1840–1855 (EELRQAAEMEELHRSS) are compositionally biased toward basic and acidic residues. Phosphoserine is present on residues serine 1860, serine 1865, serine 1873, and serine 1894. Disordered stretches follow at residues 2169-2192 (PSES…SSVC), 2365-2438 (ETFG…PTIL), and 2504-2536 (EPSK…PTGL). Composition is skewed to low complexity over residues 2174–2192 (TSVP…SSVC) and 2374–2387 (SQLP…SSLP). Composition is skewed to pro residues over residues 2404–2433 (QPPP…PTSP) and 2506–2517 (SKPPIAPKPVIP). A Phosphoserine modification is found at serine 2562. A Phosphothreonine modification is found at threonine 3069. 2 disordered regions span residues 3407–3508 (EKQP…DKTK) and 3558–3626 (KTYK…LYSP). Over residues 3432 to 3441 (DDPRSFKKIV) the composition is skewed to basic and acidic residues. Residue serine 3443 is modified to Phosphoserine. 2 positions are modified to phosphothreonine: threonine 3447 and threonine 3474. The span at 3474-3483 (TDDEDQDEWD) shows a compositional bias: acidic residues. The segment covering 3574 to 3585 (DTQSPQYLSATS) has biased composition (polar residues). 11 positions are modified to phosphoserine: serine 3577, serine 3585, serine 3615, serine 3619, serine 3625, serine 3628, serine 3631, serine 3652, serine 3678, serine 3680, and serine 3686. 2 disordered regions span residues 3652–3746 (SPQK…MGTV) and 3833–3908 (YMSD…QQSH). 2 stretches are compositionally biased toward polar residues: residues 3701–3716 (EGYT…SSGA) and 3733–3745 (STGT…TMGT). Position 3835 is a phosphoserine (serine 3835). Residues 3845 to 3857 (TRIESQHGIERPR) show a composition bias toward basic and acidic residues. The span at 3859–3908 (APQTEFSQFIPPQTQTESQLVPPTSPYTQYQYSSPALPTQAPTSYTQQSH) shows a compositional bias: polar residues. Phosphoserine is present on residues serine 4088 and serine 4204. Positions 4278–4301 (EADKPYSSGSRSRPSSRPSSVYGL) are disordered. Over residues 4282–4301 (PYSSGSRSRPSSRPSSVYGL) the composition is skewed to low complexity. Phosphoserine is present on residues serine 4358, serine 4362, serine 4365, serine 4394, and serine 4430. Residues 4389 to 4411 (RDQFGSSHSLPEVQQHMREESRT) form a disordered region. Positions 4496–4590 (RIKITRDSKD…EAEICVRLDL (95 aa)) constitute a PDZ domain. 2 disordered regions span residues 4597–4618 (ENSQ…KSPG) and 4645–4690 (EKGS…TKVV). Over residues 4598–4615 (NSQHLELHEPPKAVDKAK) the composition is skewed to basic and acidic residues. A compositionally biased stretch (low complexity) spans 4652–4673 (SGPTSAGSSSVPSPGQPGSPSV). Serine 4664 is modified (phosphoserine). The C2 1 domain maps to 4694-4823 (ITGEIQLQIN…SHLDNTPRWY (130 aa)). 2 residues coordinate Ca(2+): aspartate 4723 and aspartate 4729. The residue at position 4778 (serine 4778) is a Phosphoserine. The Ca(2+) site is built by aspartate 4793, aspartate 4795, serine 4798, and aspartate 4801. Disordered stretches follow at residues 4830 to 4907 (ESID…VTQT) and 4930 to 4986 (PTKP…QNGQ). 2 stretches are compositionally biased toward low complexity: residues 4838 to 4853 (HSSQ…SVIK) and 4877 to 4887 (SSPGSSKSSSE). The segment covering 4895–4907 (PSRSQSKTSVTQT) has biased composition (polar residues). Residues 4941–4965 (SSVSTGSSGSSFGSGYSVDSEGSSS) show a composition bias toward low complexity. The region spanning 5007 to 5132 (VMGEIKIALK…DLRKRIVNWH (126 aa)) is the C2 2 domain.

As to quaternary structure, interacts with BSN, ERC2/CAST1, RIMS1 and UNC13A. Interacts (via C-terminus) with TRIO (via N-terminus). Interacts with CTBP1. Interacts with SIAH1; this interaction negatively regulates SIAH1 E3 ligase activity. Directly interacts with GIT1 and GIT2. Requires Ca(2+) as cofactor. In terms of tissue distribution, moderately expressed in the developing cerebral cortex.

The protein localises to the presynaptic active zone. Functionally, scaffold protein of the presynaptic cytomatrix at the active zone (CAZ) which is the place in the synapse where neurotransmitter is released. After synthesis, participates in the formation of Golgi-derived membranous organelles termed Piccolo-Bassoon transport vesicles (PTVs) that are transported along axons to sites of nascent synaptic contacts. At the presynaptic active zone, regulates the spatial organization of synaptic vesicle cluster, the protein complexes that execute membrane fusion and compensatory endocytosis. Organizes as well the readily releasable pool of synaptic vesicles and safeguards a fraction of them to be not immediately available for action potential-induced release. Also functions in processes other than assembly such as the regulation of specific presynaptic protein ubiquitination by interacting with SIAH1 or the regulation of presynaptic autophagy. Also mediates synapse to nucleus communication leading to reconfiguration of gene expression by associating with the transcriptional corepressor CTBP1 and by subsequently reducing the size of its pool available for nuclear import. The polypeptide is Protein piccolo (Homo sapiens (Human)).